Here is a 128-residue protein sequence, read N- to C-terminus: Nucleoside diphosphate kinase B (128 aa).

Position 1 is an N-acetylmethionine (Met1). Residues Lys9, Phe39, Thr70, Arg81, and Asn91 each coordinate ATP. The Pros-phosphohistidine intermediate role is filled by His94.

The protein belongs to the NDK family. It depends on Mg(2+) as a cofactor.

It localises to the cytoplasm. The protein localises to the nucleus. Its subcellular location is the cell projection. It is found in the lamellipodium. The protein resides in the ruffle. The enzyme catalyses a 2'-deoxyribonucleoside 5'-diphosphate + ATP = a 2'-deoxyribonucleoside 5'-triphosphate + ADP. It catalyses the reaction a ribonucleoside 5'-diphosphate + ATP = a ribonucleoside 5'-triphosphate + ADP. Functionally, major role in the synthesis of nucleoside triphosphates other than ATP. This chain is Nucleoside diphosphate kinase B (nme2), found in Merluccius australis australis (Austral hake).